We begin with the raw amino-acid sequence, 443 residues long: MALSSTFLNPLVSSVAVNPQPKITSGKGFRVNCLIRTQQTVIKTDTKENAAVLTPGKRVEKEPSVSTVLANYHADWDPFEATSTPIYQSATFRMKNATEYNEYYYSRVANPTTSTLEKIIAEIENAEYVTCFTSGMSALTAVCELVNPGDEILTVEDIYGGSYGFIENLMVRKAGITVKRVDTSNIENVKAAMTNKTKLVWLESPSNPQLKISDIREIARIAHAYGAIVFIDNCIMSPLLSHPLELGADIVMHSATKFIAGNSSCMAGSLATNNKELADKLLSYRSATGCGLSPQDAWICLEGIKTLPLRVEEKQKNALTVANYLDNNPKITKVNYPGLPDNPGYDLHKSQSKGPGSVMSCETGSLPLSKQIVEDTKFFSKIVGFGGVGSAICLPWYTSHKAIPEPEKIRMGITKDLIRISVGIEDVQDLIQDLDNAMSTPTF.

Residues 1–43 constitute a chloroplast transit peptide; that stretch reads MALSSTFLNPLVSSVAVNPQPKITSGKGFRVNCLIRTQQTVIK. Residues Y105, R107, G135, M136, S254, and T256 each coordinate pyridoxal 5'-phosphate. Residue K257 is modified to N6-(pyridoxal phosphate)lysine.

This sequence belongs to the trans-sulfuration enzymes family. Forms homodimers. May form homotetramers from two homodimers. The cofactor is pyridoxal 5'-phosphate.

It localises to the plastid. Its subcellular location is the chloroplast. It catalyses the reaction L-mimosine + H2O = 3-hydroxy-4H-pyrid-4-one + pyruvate + NH4(+). In terms of biological role, catalyzes the degradation of mimosine, which is a toxic secondary metabolite found in all Leucaena and Mimosa species. In Leucaena leucocephala (White popinac), this protein is Mimosinase, chloroplastic.